Here is a 216-residue protein sequence, read N- to C-terminus: MSGRFLVLEGIDGCGKTTQLRHLANWLPRSGLMPEGARLHLTREPGGTALGIALRKLVLHPPGDASPEPLAELLLYAADRAQHVAQLIRPALEQGHWVLSDRFSGSTLAYQGYGRELDLDLIQQLEQIATAGLVPDLTFWLELPVEESLLRRDARSNDRIEAEGVDFLTRVATGFAVLARERSWVPLQADQQVESVSSALESQLKHHFGPLQESMR.

10–17 is an ATP binding site; the sequence is GIDGCGKT.

It belongs to the thymidylate kinase family.

It carries out the reaction dTMP + ATP = dTDP + ADP. Its function is as follows. Phosphorylation of dTMP to form dTDP in both de novo and salvage pathways of dTTP synthesis. This chain is Thymidylate kinase, found in Prochlorococcus marinus (strain MIT 9313).